A 267-amino-acid chain; its full sequence is Ras-related protein Rab-36 (267 aa).

GTP-binding residues include Val68, Gly69, Lys70, Thr71, Ser72, Asp83, Tyr86, and Thr89. Residue Thr71 coordinates Mg(2+). The Switch 1 motif lies at 76–94 (RFCKNVFDRDYKATIGVDF). Thr89 and Asp112 together coordinate Mg(2+). The Switch 2 signature appears at 113-132 (TAGQEKFKCIASAYYRGAQV). Residues Gly115, Lys172, Asp174, Ser203, Ala204, and Lys205 each coordinate GTP. The tract at residues 243 to 267 (GDLIQMEGSPPETQESKRPSSLGCC) is disordered. S-geranylgeranyl cysteine attachment occurs at residues Cys266 and Cys267.

This sequence belongs to the small GTPase superfamily. Rab family. Mg(2+) is required as a cofactor. In terms of tissue distribution, ubiquitously present in all tissues examined.

It is found in the golgi apparatus membrane. The catalysed reaction is GTP + H2O = GDP + phosphate + H(+). With respect to regulation, regulated by guanine nucleotide exchange factors (GEFs) which promote the exchange of bound GDP for free GTP. Regulated by GTPase activating proteins (GAPs) which increase the GTP hydrolysis activity. Inhibited by GDP dissociation inhibitors (GDIs). Its function is as follows. The small GTPases Rab are key regulators of intracellular membrane trafficking, from the formation of transport vesicles to their fusion with membranes. Rabs cycle between an inactive GDP-bound form and an active GTP-bound form that is able to recruit to membranes different sets of downstream effectors directly responsible for vesicle formation, movement, tethering and fusion. In Homo sapiens (Human), this protein is Ras-related protein Rab-36.